Reading from the N-terminus, the 278-residue chain is Membrane protein insertase YidC 2 (278 aa).

The N-terminal stretch at 1 to 18 (MHKRLFITLLGFIILLAG) is a signal peptide. Residue C19 is the site of N-palmitoyl cysteine attachment. Residue C19 is the site of S-diacylglycerol cysteine attachment. Transmembrane regions (helical) follow at residues 55 to 75 (GFAI…FMLI), 132 to 152 (MLGC…YMSL), 176 to 196 (LIMT…NSIH), and 224 to 244 (AAAL…QMHF).

Belongs to the OXA1/ALB3/YidC family. Type 2 subfamily.

It is found in the cell membrane. Its function is as follows. Required for the insertion and/or proper folding and/or complex formation of integral membrane proteins into the membrane. Involved in integration of membrane proteins that insert both dependently and independently of the Sec translocase complex, as well as at least some lipoproteins. The polypeptide is Membrane protein insertase YidC 2 (Staphylococcus epidermidis (strain ATCC 12228 / FDA PCI 1200)).